The sequence spans 469 residues: Solute carrier family 52, riboflavin transporter, member 3 (469 aa).

At 1-2 the chain is on the cytoplasmic side; that stretch reads MA. Residues 3–23 form a helical membrane-spanning segment; that stretch reads FLMHLLVCVFGMGSWVTINGL. Topologically, residues 24–43 are extracellular; sequence WVELPLLVMELPEGWYLPSY. Residues 44–64 traverse the membrane as a helical segment; the sequence is LTVVIQLANIGPLLVTLLHHF. At 65–71 the chain is on the cytoplasmic side; sequence RPSCLSE. Residues 72–92 form a helical membrane-spanning segment; it reads VPIIFTLLGVGTVTCIIFAFL. The Extracellular segment spans residues 93–97; that stretch reads WNMTS. Residue Asn-94 is glycosylated (N-linked (GlcNAc...) asparagine). The helical transmembrane segment at 98–118 threads the bilayer; that stretch reads WVLDGHHSIAFLVLTFFLALV. Topologically, residues 119–137 are cytoplasmic; the sequence is DCTSSVTFLPFMSRLPTYY. The helical transmembrane segment at 138–158 threads the bilayer; the sequence is LTTFFVGEGLSGLLPALVALA. Residues 159–220 lie on the Extracellular side of the membrane; it reads QGSGLTTCVN…SRYLPAHFSP (62 aa). The N-linked (GlcNAc...) asparagine glycan is linked to Asn-168. The helical transmembrane segment at 221 to 241 threads the bilayer; sequence LVFFLLLSIMMACCLVAFFVL. The Cytoplasmic segment spans residues 242-292; the sequence is QRQPRCWEASVEDLLNDQVTLHSIRPREENDLGPAGTVDSSQGQGYLEEKA. Ser-251 bears the Phosphoserine mark. A helical transmembrane segment spans residues 293-313; the sequence is APCCPAHLAFIYTLVAFVNAL. Residues 314–335 are Extracellular-facing; that stretch reads TNGMLPSVQTYSCLSYGPVAYH. A helical membrane pass occupies residues 336–356; it reads LAATLSIVANPLASLVSMFLP. Topologically, residues 357–359 are cytoplasmic; sequence NRS. A helical membrane pass occupies residues 360–380; the sequence is LLFLGVLSVLGTCFGGYNMAM. Residues 381-396 are Extracellular-facing; sequence AVMSPCPLLQGHWGGE. Cys-386 and Cys-463 form a disulfide bridge. The helical transmembrane segment at 397–417 threads the bilayer; it reads VLIVASWVLFSGCLSYVKVML. The Cytoplasmic segment spans residues 418 to 427; sequence GVVLRDLSRS. The helical transmembrane segment at 428-448 threads the bilayer; that stretch reads ALLWCGAAVQLGSLLGALLMF. The Extracellular segment spans residues 449-469; that stretch reads PLVNVLRLFSSADFCNLHCPA.

It belongs to the riboflavin transporter family. As to expression, predominantly expressed in testis. Highly expressed in small intestine and prostate.

The protein localises to the apical cell membrane. The protein resides in the cell membrane. It localises to the nucleus membrane. Its subcellular location is the cytoplasm. It catalyses the reaction riboflavin(in) = riboflavin(out). Activity is strongly inhibited by riboflavin analogs, such as lumiflavin, flavin mononucleotide (FMN), flavin adenine dinucleotide (FAD), by methylene blue, and to a lesser extent by amiloride. Riboflavin transport is Na(+)-independent at low pH but significantly reduced by Na(+) depletion under neutral pH conditions. Plasma membrane transporter mediating the uptake by cells of the water soluble vitamin B2/riboflavin that plays a key role in biochemical oxidation-reduction reactions of the carbohydrate, lipid, and amino acid metabolism. Humans are unable to synthesize vitamin B2/riboflavin and must obtain it via intestinal absorption. The polypeptide is Solute carrier family 52, riboflavin transporter, member 3 (SLC52A3) (Homo sapiens (Human)).